A 519-amino-acid polypeptide reads, in one-letter code: Probable cytosol aminopeptidase (519 aa).

2 residues coordinate Mn(2+): Lys-251 and Asp-256. The active site involves Lys-263. Mn(2+)-binding residues include Asp-274, Asp-333, and Glu-335. The active site involves Arg-337. Residues Val-487–Pro-502 show a composition bias toward low complexity. The disordered stretch occupies residues Val-487 to Pro-519.

Belongs to the peptidase M17 family. Mn(2+) serves as cofactor.

Its subcellular location is the cytoplasm. It catalyses the reaction Release of an N-terminal amino acid, Xaa-|-Yaa-, in which Xaa is preferably Leu, but may be other amino acids including Pro although not Arg or Lys, and Yaa may be Pro. Amino acid amides and methyl esters are also readily hydrolyzed, but rates on arylamides are exceedingly low.. It carries out the reaction Release of an N-terminal amino acid, preferentially leucine, but not glutamic or aspartic acids.. Presumably involved in the processing and regular turnover of intracellular proteins. Catalyzes the removal of unsubstituted N-terminal amino acids from various peptides. The polypeptide is Probable cytosol aminopeptidase (Verminephrobacter eiseniae (strain EF01-2)).